We begin with the raw amino-acid sequence, 268 residues long: Indole-3-glycerol phosphate synthase (268 aa).

Belongs to the TrpC family.

It catalyses the reaction 1-(2-carboxyphenylamino)-1-deoxy-D-ribulose 5-phosphate + H(+) = (1S,2R)-1-C-(indol-3-yl)glycerol 3-phosphate + CO2 + H2O. The protein operates within amino-acid biosynthesis; L-tryptophan biosynthesis; L-tryptophan from chorismate: step 4/5. In Parafrankia sp. (strain EAN1pec), this protein is Indole-3-glycerol phosphate synthase.